The chain runs to 239 residues: RNA polymerase sigma-E factor (239 aa).

Residues 1 to 29 (MKKLKLRLTHLWYKLLMKLGLKSDEVYYI) constitute a propeptide, removed by SpoIIGA. The Polymerase core binding motif lies at 86–99 (DLISIGTIGLIKAV). Positions 206–225 (QKDVADMMGISQSYISRLEK) form a DNA-binding region, H-T-H motif.

This sequence belongs to the sigma-70 factor family. Post-translationally, proteolytically cleaved in the N-terminus by SpoIIGA to yield the active peptide.

Its function is as follows. Sigma factors are initiation factors that promote the attachment of RNA polymerase to specific initiation sites and are then released. This sigma factor is responsible for the expression of sporulation specific genes. This is RNA polymerase sigma-E factor (sigE) from Bacillus subtilis (strain 168).